Reading from the N-terminus, the 290-residue chain is 4-hydroxybenzoate octaprenyltransferase (290 aa).

The next 8 helical transmembrane spans lie at 40–60 (IAGA…GVVI), 99–119 (LALF…LNEL), 120–140 (TFWL…TKRF), 142–162 (FMPQ…AFAA), 165–185 (GEVP…TVAY), 215–235 (LMIA…GHRL), 239–259 (WPWY…HSLI), and 267–287 (SFHA…GLYF).

The protein belongs to the UbiA prenyltransferase family. The cofactor is Mg(2+).

It is found in the cell inner membrane. The enzyme catalyses all-trans-octaprenyl diphosphate + 4-hydroxybenzoate = 4-hydroxy-3-(all-trans-octaprenyl)benzoate + diphosphate. It participates in cofactor biosynthesis; ubiquinone biosynthesis. Functionally, catalyzes the prenylation of para-hydroxybenzoate (PHB) with an all-trans polyprenyl group. Mediates the second step in the final reaction sequence of ubiquinone-8 (UQ-8) biosynthesis, which is the condensation of the polyisoprenoid side chain with PHB, generating the first membrane-bound Q intermediate 3-octaprenyl-4-hydroxybenzoate. The sequence is that of 4-hydroxybenzoate octaprenyltransferase from Alcanivorax borkumensis (strain ATCC 700651 / DSM 11573 / NCIMB 13689 / SK2).